The sequence spans 521 residues: Probable protein phosphatase 2C 16 (521 aa).

The 307-residue stretch at K21 to F327 folds into the PPM-type phosphatase domain. Mn(2+) contacts are provided by D57, G58, Q276, and E318. Positions A354–P431 are disordered.

The protein belongs to the PP2C family. It depends on Mg(2+) as a cofactor. Requires Mn(2+) as cofactor.

It carries out the reaction O-phospho-L-seryl-[protein] + H2O = L-seryl-[protein] + phosphate. It catalyses the reaction O-phospho-L-threonyl-[protein] + H2O = L-threonyl-[protein] + phosphate. This chain is Probable protein phosphatase 2C 16, found in Oryza sativa subsp. japonica (Rice).